The sequence spans 430 residues: Tryptophan synthase beta chain (430 aa).

Lys95 carries the post-translational modification N6-(pyridoxal phosphate)lysine.

Belongs to the TrpB family. As to quaternary structure, tetramer of two alpha and two beta chains. Pyridoxal 5'-phosphate is required as a cofactor.

The catalysed reaction is (1S,2R)-1-C-(indol-3-yl)glycerol 3-phosphate + L-serine = D-glyceraldehyde 3-phosphate + L-tryptophan + H2O. It participates in amino-acid biosynthesis; L-tryptophan biosynthesis; L-tryptophan from chorismate: step 5/5. Functionally, the beta subunit is responsible for the synthesis of L-tryptophan from indole and L-serine. The chain is Tryptophan synthase beta chain from Halobacterium salinarum (strain ATCC 29341 / DSM 671 / R1).